We begin with the raw amino-acid sequence, 358 residues long: MAVTSSSSTCDGFFIISLIVIVSSLFGTSSAQLNATFYSGTCPNASAIVRSTIQQALQSDARIGGSLIRLHFHDCFVNGCDGSLLLDDTSSIQSEKNAPANANSTRGFNVVDSIKTALENACPGIVSCSDILALASEASVSLAGGPSWTVLLGRRDGLTANLSGANSSLPSPFEGLNNITSKFVAVGLKTTDVVSLSGAHTFGRGQCVTFNNRLFNFNGTGNPDPTLNSTLLSSLQQLCPQNGSNTGITNLDLSTPDAFDNNYFTNLQSNNGLLQSDQELFSNTGSATVPIVNSFASNQTLFFEAFVQSMIKMGNISPLTGSSGEIRQDCKVVNGQSSATEAGDIQLQSDGPVSVADM.

An N-terminal signal peptide occupies residues 1 to 31; that stretch reads MAVTSSSSTCDGFFIISLIVIVSSLFGTSSA. Position 32 is a pyrrolidone carboxylic acid (Gln32). 2 N-linked (GlcNAc...) asparagine glycosylation sites follow: Asn34 and Asn44. Disulfide bonds link Cys42–Cys122, Cys75–Cys80, Cys128–Cys330, and Cys207–Cys239. His73 functions as the Proton acceptor in the catalytic mechanism. Residues Asp74, Val77, Gly79, Asp81, and Ser83 each contribute to the Ca(2+) site. Asn103, Asn161, and Asn166 each carry an N-linked (GlcNAc...) asparagine glycan. Pro170 contacts substrate. N-linked (GlcNAc...) asparagine glycosylation occurs at Asn178. His200 contributes to the heme b binding site. A Ca(2+)-binding site is contributed by Thr201. N-linked (GlcNAc...) asparagine glycans are attached at residues Asn218, Asn228, and Asn242. The Ca(2+) site is built by Asp252, Thr255, and Asp260. An N-linked (GlcNAc...) asparagine glycan is attached at Asn298.

This sequence belongs to the peroxidase family. Classical plant (class III) peroxidase subfamily. Heme b serves as cofactor. Ca(2+) is required as a cofactor.

It localises to the secreted. The protein localises to the vacuole. It carries out the reaction 2 a phenolic donor + H2O2 = 2 a phenolic radical donor + 2 H2O. Functionally, removal of H(2)O(2), oxidation of toxic reductants, biosynthesis and degradation of lignin, suberization, auxin catabolism, response to environmental stresses such as wounding, pathogen attack and oxidative stress. These functions might be dependent on each isozyme/isoform in each plant tissue. The polypeptide is Peroxidase 54 (PER54) (Arabidopsis thaliana (Mouse-ear cress)).